Here is a 474-residue protein sequence, read N- to C-terminus: Aspartyl/glutamyl-tRNA(Asn/Gln) amidotransferase subunit B (474 aa).

The protein belongs to the GatB/GatE family. GatB subfamily. As to quaternary structure, heterotrimer of A, B and C subunits.

It carries out the reaction L-glutamyl-tRNA(Gln) + L-glutamine + ATP + H2O = L-glutaminyl-tRNA(Gln) + L-glutamate + ADP + phosphate + H(+). The enzyme catalyses L-aspartyl-tRNA(Asn) + L-glutamine + ATP + H2O = L-asparaginyl-tRNA(Asn) + L-glutamate + ADP + phosphate + 2 H(+). In terms of biological role, allows the formation of correctly charged Asn-tRNA(Asn) or Gln-tRNA(Gln) through the transamidation of misacylated Asp-tRNA(Asn) or Glu-tRNA(Gln) in organisms which lack either or both of asparaginyl-tRNA or glutaminyl-tRNA synthetases. The reaction takes place in the presence of glutamine and ATP through an activated phospho-Asp-tRNA(Asn) or phospho-Glu-tRNA(Gln). The polypeptide is Aspartyl/glutamyl-tRNA(Asn/Gln) amidotransferase subunit B (Wolbachia sp. subsp. Brugia malayi (strain TRS)).